A 123-amino-acid polypeptide reads, in one-letter code: Thioredoxin domain-containing protein 17 (123 aa).

N-acetylalanine is present on alanine 2. Residues 41–123 form the Thioredoxin domain; it reads SWCPDCVEAE…SLVEMIFSED (83 aa). Residues cysteine 43 and cysteine 46 each act as nucleophile in the active site. Cysteines 43 and 46 form a disulfide.

It belongs to the thioredoxin family. As to quaternary structure, interacts with TRXR1 and DYNLL1/DNCL1. In terms of processing, the oxidized protein is reduced by TRXR1.

Its subcellular location is the cytoplasm. Its function is as follows. Disulfide reductase. May participate in various redox reactions through the reversible oxidation of its active center dithiol to a disulfide and catalyze dithiol-disulfide exchange reactions. Modulates TNF-alpha signaling and NF-kappa-B activation. Has peroxidase activity and may contribute to the elimination of cellular hydrogen peroxide. The polypeptide is Thioredoxin domain-containing protein 17 (Txndc17) (Mus musculus (Mouse)).